A 105-amino-acid chain; its full sequence is Anti-sigma factor RsrA (105 aa).

Zn(2+)-binding residues include cysteine 11, histidine 37, cysteine 41, and cysteine 44. A disulfide bridge links cysteine 11 with cysteine 44. Residues 33–47 (KFEHHFEECSPCLEK) form a contributes to redox-sensitivity region. Positions 86–105 (QSVPEHDVAAAPSSSAPQES) are disordered. The span at 94-105 (AAAPSSSAPQES) shows a compositional bias: low complexity.

It belongs to the zinc-associated anti-sigma factor (ZAS) superfamily. In terms of assembly, interacts with cognate sigma factor SigR under reducing but not oxiding conditions. Treatment with the thiol-oxidzing agent diamide inhibits the interaction, while incubation with thioredoxin (trxA) stimulates the interaction. Requires Zn(2+) as cofactor. Under oxidizing conditions up to 3 disulfide bonds are formed. A single disulfide bond inhibits binding to SigR. Cys-11 forms a disulfide bond with either Cys-44 (the major bind) or Cys-41 (a minor bond).

Its function is as follows. A redox-regulated anti-sigma factor for extracytoplasmic function (ECF) sigma factor SigR, and a key sensor of disulfide stress. Holds SigR, its cognate ECF sigma factor, in an inactive form, inhibiting its sigma activity under reducing but not oxidizing conditions; oxidation and reduction of the anti-sigma factor is reversible. Mycothiol (MSH) is competent for reduction of RsrA, allowing it to bind to SigR. In conjunction with its cognate sigma factor SigR may sense the intracellular level of reduced MSH. Probably releases SigR during oxidative stress. This chain is Anti-sigma factor RsrA (rsrA), found in Streptomyces coelicolor (strain ATCC BAA-471 / A3(2) / M145).